Reading from the N-terminus, the 119-residue chain is Large ribosomal subunit protein bL20 (119 aa).

This sequence belongs to the bacterial ribosomal protein bL20 family.

Its function is as follows. Binds directly to 23S ribosomal RNA and is necessary for the in vitro assembly process of the 50S ribosomal subunit. It is not involved in the protein synthesizing functions of that subunit. This chain is Large ribosomal subunit protein bL20, found in Thermoanaerobacter pseudethanolicus (strain ATCC 33223 / 39E) (Clostridium thermohydrosulfuricum).